The chain runs to 52 residues: Protein RepA (52 aa).

A DNA-binding region (H-T-H motif) is located at residues 20 to 40 (KLEELAQKYGMTKSGLVNFLV).

This sequence belongs to the transcriptional regulatory CopG/NikR family. As to quaternary structure, homodimer.

Its function is as follows. Regulates the plasmid copy number. RepA binds to the repAB promoter thus controlling the synthesis of the plasmid replication initiator protein RepB. The sequence is that of Protein RepA (repA) from Lactiplantibacillus plantarum (Lactobacillus plantarum).